Consider the following 302-residue polypeptide: Glycine--tRNA ligase alpha subunit (302 aa).

It belongs to the class-II aminoacyl-tRNA synthetase family. As to quaternary structure, tetramer of two alpha and two beta subunits.

Its subcellular location is the cytoplasm. It catalyses the reaction tRNA(Gly) + glycine + ATP = glycyl-tRNA(Gly) + AMP + diphosphate. This Baumannia cicadellinicola subsp. Homalodisca coagulata protein is Glycine--tRNA ligase alpha subunit.